Consider the following 260-residue polypeptide: Thrombin-like enzyme gloshedobin (260 aa).

The N-terminal stretch at 1–18 (MVLIRVQANLLILQLSYA) is a signal peptide. Residues 19-24 (QKSSEL) constitute a propeptide that is removed on maturation. Positions 25–252 (IIGGDECNIN…TEWIQSIIAG (228 aa)) constitute a Peptidase S1 domain. 6 cysteine pairs are disulfide-bonded: Cys31–Cys165, Cys52–Cys68, Cys100–Cys258, Cys144–Cys212, Cys176–Cys191, and Cys202–Cys227. Active-site charge relay system residues include His67 and Asp112. 2 N-linked (GlcNAc...) asparagine glycosylation sites follow: Asn123 and Asn124. Residue Ser206 is the Charge relay system of the active site.

It belongs to the peptidase S1 family. Snake venom subfamily. Monomer. As to expression, expressed by the venom gland.

Its subcellular location is the secreted. Completely inhibited by PMSF, and N-tosyl-Lphenylalanine chloromethyl ketone (TPCK) and poorly inhibited by benzamidine and derivates. Not inhibited by EDTA, heparin and hirudin. Its function is as follows. Thrombin-like snake venom serine protease. The recombinant form clots fibrinogen by cleaving fibrinogen Aalpha chain (FGA), and slowly Bbeta chain (FGB). Has amidolytic activities. The polypeptide is Thrombin-like enzyme gloshedobin (Gloydius shedaoensis (Shedao island pit viper)).